Reading from the N-terminus, the 252-residue chain is 5-oxoprolinase subunit A (252 aa).

This sequence belongs to the LamB/PxpA family. As to quaternary structure, forms a complex composed of PxpA, PxpB and PxpC.

It carries out the reaction 5-oxo-L-proline + ATP + 2 H2O = L-glutamate + ADP + phosphate + H(+). In terms of biological role, catalyzes the cleavage of 5-oxoproline to form L-glutamate coupled to the hydrolysis of ATP to ADP and inorganic phosphate. This Mycobacterium leprae (strain Br4923) protein is 5-oxoprolinase subunit A.